A 239-amino-acid chain; its full sequence is Probable phosphatase Csac_1188 (239 aa).

Residues H8, H10, H16, H41, E74, H102, H132, D192, and H194 each contribute to the Zn(2+) site.

This sequence belongs to the PHP family. It depends on Zn(2+) as a cofactor.

This Caldicellulosiruptor saccharolyticus (strain ATCC 43494 / DSM 8903 / Tp8T 6331) protein is Probable phosphatase Csac_1188.